The chain runs to 636 residues: DNA mismatch repair protein MutL (636 aa).

The segment at 362-393 (RKTPEVHEEAEKPEFLVKQEAKNSEEPKNETE) is disordered. The span at 363–393 (KTPEVHEEAEKPEFLVKQEAKNSEEPKNETE) shows a compositional bias: basic and acidic residues.

This sequence belongs to the DNA mismatch repair MutL/HexB family.

Functionally, this protein is involved in the repair of mismatches in DNA. It is required for dam-dependent methyl-directed DNA mismatch repair. May act as a 'molecular matchmaker', a protein that promotes the formation of a stable complex between two or more DNA-binding proteins in an ATP-dependent manner without itself being part of a final effector complex. The chain is DNA mismatch repair protein MutL from Lactobacillus helveticus (strain DPC 4571).